The sequence spans 550 residues: MPAAWMPVLRLGAYASRVPGPAGGDGAVPIAITCFTRGLDIRKEKADVLCPAGCPLEEFSVFGNIVYASVSSICGAAVHRGVISISGGPVRVYSLPGRENYSSVDANGIQSQTLARWSASFTVTKGKSSTQEATGQAVSTARPPTGKRLKKTPEKKTGNKDCKADIAFLIDGSFNIGQRRFNLQKNFVGKVALMLGIGTEGPHVGLVQASEHPKIEFYLKNFTSAKDVLFAIKEVGFRGGNSNTGKALKHTAQKFFTADTGMRKGIPKVVVVFIDGWPSDDIEEAGIVAREFGVNVFIVSVAKPIPEELGMVQDVAFVDKAVCRNNGFFSYHMPNWFGTTKYVKPLVQKLCSHEQMMCSKTCYNSVNIAFLIDGSSSVGDSNFRLMLEFVSNIAKTFEISDIGAKIAAVQFTYDQRTEFSFTDYSTKENVLAVIRSIRYMSGGTATGDAISFTVRNVFGPVRDSPNKNFLVIITDGQSYDDVRGPAAAAHDAGITIFSVGVAWAPLDDLKDMASKPKESHAFFTREFTGLEPIVSDIIRGICRDFLESQQ.

The first 15 residues, methionine 1–alanine 15, serve as a signal peptide directing secretion. An LCCL domain is found at valine 28–phenylalanine 121. Cystine bridges form between cysteine 34–cysteine 50 and cysteine 54–cysteine 74. Residue asparagine 100 is glycosylated (N-linked (GlcNAc...) asparagine). Residues glycine 126–serine 139 show a composition bias toward polar residues. Residues glycine 126–glycine 158 form a disordered region. VWFA domains lie at aspartate 165–leucine 350 and asparagine 367–isoleucine 537.

As to quaternary structure, monomer. May form homodimer. Interacts with type II collagen. Interacts with ANXA2. Interacts with SLC44A2. N-glycosylated.

Its subcellular location is the secreted. It is found in the extracellular space. It localises to the extracellular matrix. Functionally, plays a role in the control of cell shape and motility in the trabecular meshwork. In Cavia porcellus (Guinea pig), this protein is Cochlin (COCH).